Here is a 295-residue protein sequence, read N- to C-terminus: Glycine--tRNA ligase alpha subunit (295 aa).

It belongs to the class-II aminoacyl-tRNA synthetase family. In terms of assembly, tetramer of two alpha and two beta subunits.

It is found in the cytoplasm. The enzyme catalyses tRNA(Gly) + glycine + ATP = glycyl-tRNA(Gly) + AMP + diphosphate. In Thermosynechococcus vestitus (strain NIES-2133 / IAM M-273 / BP-1), this protein is Glycine--tRNA ligase alpha subunit.